We begin with the raw amino-acid sequence, 269 residues long: Glutamate racemase (269 aa).

Substrate-binding positions include 7-8 (DS) and 39-40 (YG). Cys70 acts as the Proton donor/acceptor in catalysis. Position 71–72 (71–72 (NT)) interacts with substrate. Cys194 serves as the catalytic Proton donor/acceptor. Residue 195–196 (TH) participates in substrate binding.

The protein belongs to the aspartate/glutamate racemases family.

The catalysed reaction is L-glutamate = D-glutamate. It functions in the pathway cell wall biogenesis; peptidoglycan biosynthesis. Functionally, provides the (R)-glutamate required for cell wall biosynthesis. This Roseobacter denitrificans (strain ATCC 33942 / OCh 114) (Erythrobacter sp. (strain OCh 114)) protein is Glutamate racemase.